A 910-amino-acid polypeptide reads, in one-letter code: Auxilin (910 aa).

Tandem repeats lie at residues 33–36, 37–40, and 41–44. A 3 X 4 AA approximate tandem repeats region spans residues 33-44; it reads NLKDNLKDTLKD. Residues 52 to 219 form the Phosphatase tensin-type domain; it reads SVTSYTKGDL…GYMCDLLADK (168 aa). Ser109 bears the Phosphoserine mark. The active-site Phosphocysteine intermediate is the Cys161. The 139-residue stretch at 225–363 folds into the C2 tensin-type domain; sequence FKPLTIKSIT…FQVTLDVELQ (139 aa). The SH3-binding signature appears at 406–414; that stretch reads PIDIPPDNP. The disordered stretch occupies residues 448 to 772; sequence QESEQSDDEL…RGKAAANLEG (325 aa). Phosphoserine occurs at positions 450, 453, 560, and 567. A compositionally biased stretch (low complexity) spans 547–569; that stretch reads PSGPTSTQSTPRRSATSTSASPT. Residues 596–626 are compositionally biased toward polar residues; the sequence is FLNTASASSDPFLQPTRSPSPTVHASSTPAV. Residues 651–666 show a composition bias toward low complexity; the sequence is SAATSPTGSSHGTPTH. Positions 715 to 725 are enriched in gly residues; it reads MGGGWQQGGGY. The segment covering 732–758 has biased composition (polar residues); that stretch reads SKPQSSMPHSSPQNRPNYNVSFSSMPG. Residues 846 to 910 form the J domain; the sequence is TKWKPVGMAD…FENQGQKPLY (65 aa).

In terms of assembly, forms a complex composed of HSPA8, CLTC and DNAJC6. Interacts with HSPA8/HSC70 in an ATP-dependent manner; this interaction stimulates the HSPA8's ATPase activity. Interacts with CLTC; this interaction produces a local change in heavy-chain contacts, creating a detectable global distortion of the clathrin coat. Interacts with AP2A2. Interacts with DNM1(GTP-bound form); this interaction allows clathrin-coated vesicle (CCV) formation at the plasma membrane. In terms of processing, the N-terminus is blocked. Post-translationally, phosphorylation at Ser-567 modulates its ability to bind CLTC and therefore the synaptic vesicle endocytosis (SVE). In terms of tissue distribution, brain.

It is found in the cytoplasmic vesicle. The protein resides in the clathrin-coated vesicle. In terms of biological role, may act as a protein phosphatase and/or a lipid phosphatase. Co-chaperone that recruits HSPA8/HSC70 to clathrin-coated vesicles (CCVs) and promotes the ATP-dependent dissociation of clathrin from CCVs and participates in clathrin-mediated endocytosis of synaptic vesicles and their recycling and also in intracellular trafficking. Firstly, binds tightly to the clathrin cages, at a ratio of one DNAJC6 per clathrin triskelion. The HSPA8:ATP complex then binds to the clathrin-auxilin cage, initially at a ratio of one HSPA8 per triskelion leading to ATP hydrolysis stimulation and causing a conformational change in the HSPA8. This cycle is repeated three times to drive to a complex containing the clathrin-auxilin cage associated to three HSPA8:ADP complex. The ATP hydrolysis of the third HSPA8:ATP complex leads to a concerted dismantling of the cage into component triskelia. Then, dissociates from the released triskelia and be recycled to initiate another cycle of HSPA8's recruitment. Also acts during the early steps of clathrin-coated vesicle (CCV) formation through its interaction with the GTP bound form of DNM1. This is Auxilin from Bos taurus (Bovine).